Consider the following 378-residue polypeptide: 23S rRNA (uracil(747)-C(5))-methyltransferase RlmC (378 aa).

The [4Fe-4S] cluster site is built by cysteine 3, cysteine 11, cysteine 14, and cysteine 87. Residues glutamine 212, phenylalanine 241, glutamate 262, and asparagine 309 each contribute to the S-adenosyl-L-methionine site. Cysteine 336 functions as the Nucleophile in the catalytic mechanism.

This sequence belongs to the class I-like SAM-binding methyltransferase superfamily. RNA M5U methyltransferase family. RlmC subfamily.

The enzyme catalyses uridine(747) in 23S rRNA + S-adenosyl-L-methionine = 5-methyluridine(747) in 23S rRNA + S-adenosyl-L-homocysteine + H(+). In terms of biological role, catalyzes the formation of 5-methyl-uridine at position 747 (m5U747) in 23S rRNA. The protein is 23S rRNA (uracil(747)-C(5))-methyltransferase RlmC of Shewanella pealeana (strain ATCC 700345 / ANG-SQ1).